The following is a 585-amino-acid chain: Tyramine beta-hydroxylase (585 aa).

An N-terminal signal peptide occupies residues 1 to 21; it reads MKCANAAALLFFVLCDIGVHG. Residues 31–142 form the DOMON domain; sequence SNVTVKWQTD…GTTQFYIAAS (112 aa). N-linked (GlcNAc...) asparagine glycans are attached at residues Asn32 and Asn71. Tyr206 is a catalytic residue. 2 disulfide bridges follow: Cys208/Cys258 and Cys247/Cys270. Cu(2+) contacts are provided by His240 and His241. The Cu(2+) site is built by His308, His386, and His388. 3 disulfides stabilise this stretch: Cys365–Cys477, Cys369–Cys534, and Cys440–Cys462. His386 is an active-site residue. Residue Asn449 is glycosylated (N-linked (GlcNAc...) asparagine). A Cu(2+)-binding site is contributed by Met461. N-linked (GlcNAc...) asparagine glycosylation is present at Asn483.

The protein belongs to the copper type II ascorbate-dependent monooxygenase family. Requires Cu(2+) as cofactor.

Its subcellular location is the cytoplasmic vesicle. It is found in the secretory vesicle. The protein resides in the synaptic vesicle. It catalyses the reaction tyramine + L-ascorbate + O2 = (R)-octopamine + L-dehydroascorbate + H2O. Its function is as follows. Catalyzes the hydroxylation of tyramine into octopamine, a neurotransmitter involved in pharyngeal pumping and egg laying. The polypeptide is Tyramine beta-hydroxylase (tbh-1) (Caenorhabditis briggsae).